Reading from the N-terminus, the 759-residue chain is Protein MTSS 1 (759 aa).

Residues 1–254 (MEAVIEKECS…EQVILDLKGS (254 aa)) enclose the IMD domain. The stretch at 108 to 157 (LQEQMEEWKKVANQLDKDHAKEYKKARQEIKNKSSDTLKLQKKAKKVDAQ) forms a coiled coil. The interval 259–309 (SYQTPPSSPSTTMSRKSSVCSSLNSVNSSDSRSSGSHSHSPSSHYRYRSSN) is disordered. A Phosphothreonine modification is found at T262. S265, S266, S275, and S326 each carry phosphoserine. The disordered stretch occupies residues 331 to 354 (QDAFQSKSPSPMPPEAANQLSNGF). At T429 the chain carries Phosphothreonine. Disordered stretches follow at residues 431–472 (QRRK…AATR) and 569–759 (KRPA…PRFS). Position 607 is a phosphothreonine (T607). Positions 612 to 627 (PIPIKTPVIPVKTPTV) are enriched in low complexity. S648 and S651 each carry phosphoserine. Positions 660–670 (GVSNIPSSLWS) are enriched in polar residues. Positions 675-685 (VNPPLPGPKPS) are enriched in pro residues. The WH2 domain maps to 731–748 (QGEDMLNAIRRGVKLKKT).

This sequence belongs to the MTSS family. As to quaternary structure, binds to actin. In terms of tissue distribution, strongly expressed in the developing neurons and skeletal and cardiac muscles in embryos. Strongly expressed also in liver, outer layers of the kidney, and in the Purkinje cells of the brain.

It localises to the cytoplasm. It is found in the cytoskeleton. Its function is as follows. Inhibits the nucleation of actin filaments in vitro. The polypeptide is Protein MTSS 1 (Mus musculus (Mouse)).